The following is a 304-amino-acid chain: Acetyl-coenzyme A carboxylase carboxyl transferase subunit beta (304 aa).

The 270-residue stretch at 25-294 (LWIKCPETGE…KAVKRDTATE (270 aa)) folds into the CoA carboxyltransferase N-terminal domain.

Belongs to the AccD/PCCB family. In terms of assembly, acetyl-CoA carboxylase is a heterohexamer composed of biotin carboxyl carrier protein (AccB), biotin carboxylase (AccC) and two subunits each of ACCase subunit alpha (AccA) and ACCase subunit beta (AccD).

It localises to the cytoplasm. It catalyses the reaction N(6)-carboxybiotinyl-L-lysyl-[protein] + acetyl-CoA = N(6)-biotinyl-L-lysyl-[protein] + malonyl-CoA. It participates in lipid metabolism; malonyl-CoA biosynthesis; malonyl-CoA from acetyl-CoA: step 1/1. In terms of biological role, component of the acetyl coenzyme A carboxylase (ACC) complex. Biotin carboxylase (BC) catalyzes the carboxylation of biotin on its carrier protein (BCCP) and then the CO(2) group is transferred by the transcarboxylase to acetyl-CoA to form malonyl-CoA. This chain is Acetyl-coenzyme A carboxylase carboxyl transferase subunit beta, found in Rhizobium meliloti (strain 1021) (Ensifer meliloti).